The chain runs to 68 residues: Phage-like element PBSX protein XtrA (68 aa).

This sequence to B.subtilis YqaO.

This Bacillus subtilis (strain 168) protein is Phage-like element PBSX protein XtrA (xtrA).